A 91-amino-acid polypeptide reads, in one-letter code: ATP synthase subunit c (91 aa).

2 helical membrane passes run 4 to 24 (FTMC…GTGI) and 53 to 73 (IGLA…LIIL).

Belongs to the ATPase C chain family. F-type ATPases have 2 components, F(1) - the catalytic core - and F(0) - the membrane proton channel. F(1) has five subunits: alpha(3), beta(3), gamma(1), delta(1), epsilon(1). F(0) has three main subunits: a(1), b(2) and c(10-14). The alpha and beta chains form an alternating ring which encloses part of the gamma chain. F(1) is attached to F(0) by a central stalk formed by the gamma and epsilon chains, while a peripheral stalk is formed by the delta and b chains.

It localises to the cell inner membrane. F(1)F(0) ATP synthase produces ATP from ADP in the presence of a proton or sodium gradient. F-type ATPases consist of two structural domains, F(1) containing the extramembraneous catalytic core and F(0) containing the membrane proton channel, linked together by a central stalk and a peripheral stalk. During catalysis, ATP synthesis in the catalytic domain of F(1) is coupled via a rotary mechanism of the central stalk subunits to proton translocation. Its function is as follows. Key component of the F(0) channel; it plays a direct role in translocation across the membrane. A homomeric c-ring of between 10-14 subunits forms the central stalk rotor element with the F(1) delta and epsilon subunits. The protein is ATP synthase subunit c of Geotalea uraniireducens (strain Rf4) (Geobacter uraniireducens).